Reading from the N-terminus, the 407-residue chain is 1-deoxy-D-xylulose 5-phosphate reductoisomerase (407 aa).

Thr-25, Gly-26, Ser-27, Ile-28, Asn-53, and Asn-136 together coordinate NADPH. Lys-137 provides a ligand contact to 1-deoxy-D-xylulose 5-phosphate. Glu-138 serves as a coordination point for NADPH. Asp-162 provides a ligand contact to Mn(2+). Positions 163, 164, 188, and 211 each coordinate 1-deoxy-D-xylulose 5-phosphate. Glu-164 lines the Mn(2+) pocket. Gly-217 contributes to the NADPH binding site. 1-deoxy-D-xylulose 5-phosphate is bound by residues Ser-224, Asn-229, Lys-230, and Glu-233. Residue Glu-233 coordinates Mn(2+).

This sequence belongs to the DXR family. Requires Mg(2+) as cofactor. It depends on Mn(2+) as a cofactor.

It carries out the reaction 2-C-methyl-D-erythritol 4-phosphate + NADP(+) = 1-deoxy-D-xylulose 5-phosphate + NADPH + H(+). The protein operates within isoprenoid biosynthesis; isopentenyl diphosphate biosynthesis via DXP pathway; isopentenyl diphosphate from 1-deoxy-D-xylulose 5-phosphate: step 1/6. Catalyzes the NADPH-dependent rearrangement and reduction of 1-deoxy-D-xylulose-5-phosphate (DXP) to 2-C-methyl-D-erythritol 4-phosphate (MEP). This Rhodopseudomonas palustris (strain BisA53) protein is 1-deoxy-D-xylulose 5-phosphate reductoisomerase.